The primary structure comprises 166 residues: Endoribonuclease YbeY (166 aa).

Zn(2+) is bound by residues His136, His140, and His146.

It belongs to the endoribonuclease YbeY family. The cofactor is Zn(2+).

The protein localises to the cytoplasm. Single strand-specific metallo-endoribonuclease involved in late-stage 70S ribosome quality control and in maturation of the 3' terminus of the 16S rRNA. The chain is Endoribonuclease YbeY from Synechococcus sp. (strain CC9605).